A 193-amino-acid chain; its full sequence is dTTP/UTP pyrophosphatase (193 aa).

The active-site Proton acceptor is the D70.

This sequence belongs to the Maf family. YhdE subfamily. It depends on a divalent metal cation as a cofactor.

The protein localises to the cytoplasm. The catalysed reaction is dTTP + H2O = dTMP + diphosphate + H(+). It carries out the reaction UTP + H2O = UMP + diphosphate + H(+). In terms of biological role, nucleoside triphosphate pyrophosphatase that hydrolyzes dTTP and UTP. May have a dual role in cell division arrest and in preventing the incorporation of modified nucleotides into cellular nucleic acids. This Ruminiclostridium cellulolyticum (strain ATCC 35319 / DSM 5812 / JCM 6584 / H10) (Clostridium cellulolyticum) protein is dTTP/UTP pyrophosphatase.